Here is a 101-residue protein sequence, read N- to C-terminus: Anti-sigma factor RshA (101 aa).

Residues 1–20 (MSETEREDERWTPPIGPIDP) form a disordered region. Iron-sulfur cluster contacts are provided by Cys25, His51, Cys55, and Cys58. At Thr96 the chain carries Phosphothreonine.

It belongs to the zinc-associated anti-sigma factor (ZAS) superfamily. In terms of assembly, interacts with cognate ECF RNA polymerase sigma factor SigH under reducing conditions; the complex is disrupted under oxiding conditions or as temperatures rise. Binding inhibits the interaction of SigH with the RNA polymerase catalytic core. Iron-sulfur cluster serves as cofactor. Post-translationally, phosphorylated, probably by PknB. Phosphorylation decreases interaction with SigH, probably leading to increased SigH-mediated transcription.

A redox-regulated anti-sigma factor for cognate extracytoplasmic function (ECF) sigma factor SigH. ECF sigma factors are held in an inactive form by an anti-sigma factor. Overexpression leads to increased susceptibility to diamide. This Mycolicibacterium smegmatis (strain ATCC 700084 / mc(2)155) (Mycobacterium smegmatis) protein is Anti-sigma factor RshA (rshA).